The sequence spans 331 residues: Protein-methionine-sulfoxide reductase catalytic subunit MsrP (331 aa).

Positions 1 to 57 (MLIKKTLRAALAGDDIPRSEITPRAVFEHRRRILQAAGAAAAGGLVGAHGLALAAYA) form a signal peptide, tat-type signal. Residues Asn90, 93–94 (YE), Cys148, Thr183, Asn231, Arg236, and 247–249 (SAK) each bind Mo-molybdopterin.

Belongs to the MsrP family. Heterodimer of a catalytic subunit (MsrP) and a heme-binding subunit (MsrQ). Mo-molybdopterin is required as a cofactor. Post-translationally, predicted to be exported by the Tat system. The position of the signal peptide cleavage has not been experimentally proven.

The protein localises to the periplasm. The catalysed reaction is L-methionyl-[protein] + a quinone + H2O = L-methionyl-(S)-S-oxide-[protein] + a quinol. It carries out the reaction L-methionyl-[protein] + a quinone + H2O = L-methionyl-(R)-S-oxide-[protein] + a quinol. Its function is as follows. Part of the MsrPQ system that repairs oxidized periplasmic proteins containing methionine sulfoxide residues (Met-O), using respiratory chain electrons. Thus protects these proteins from oxidative-stress damage caused by reactive species of oxygen and chlorine generated by the host defense mechanisms. MsrPQ is essential for the maintenance of envelope integrity under bleach stress, rescuing a wide series of structurally unrelated periplasmic proteins from methionine oxidation. The catalytic subunit MsrP is non-stereospecific, being able to reduce both (R-) and (S-) diastereoisomers of methionine sulfoxide. The sequence is that of Protein-methionine-sulfoxide reductase catalytic subunit MsrP from Burkholderia mallei (strain ATCC 23344).